The chain runs to 224 residues: Holliday junction branch migration complex subunit RuvA (224 aa).

The domain I stretch occupies residues 1–64 (MIGKVAGILD…EDLLQLFGFP (64 aa)). Residues 65–143 (TMIEKEWHRL…ALMAMGGGTA (79 aa)) are domain II. The tract at residues 141 to 185 (GTAALAPSEPPEPEPGTSSGSRRKTRAPEPPRPSHTADALSALAN) is disordered. Positions 144–170 (ALAPSEPPEPEPGTSSGSRRKTRAPEP) are flexible linker. The tract at residues 171-224 (PRPSHTADALSALANLGYQPTDAAQAVAQAAGESPDADTAALIRAALKLLAPKS) is domain III.

Belongs to the RuvA family. Homotetramer. Forms an RuvA(8)-RuvB(12)-Holliday junction (HJ) complex. HJ DNA is sandwiched between 2 RuvA tetramers; dsDNA enters through RuvA and exits via RuvB. An RuvB hexamer assembles on each DNA strand where it exits the tetramer. Each RuvB hexamer is contacted by two RuvA subunits (via domain III) on 2 adjacent RuvB subunits; this complex drives branch migration. In the full resolvosome a probable DNA-RuvA(4)-RuvB(12)-RuvC(2) complex forms which resolves the HJ.

The protein localises to the cytoplasm. In terms of biological role, the RuvA-RuvB-RuvC complex processes Holliday junction (HJ) DNA during genetic recombination and DNA repair, while the RuvA-RuvB complex plays an important role in the rescue of blocked DNA replication forks via replication fork reversal (RFR). RuvA specifically binds to HJ cruciform DNA, conferring on it an open structure. The RuvB hexamer acts as an ATP-dependent pump, pulling dsDNA into and through the RuvAB complex. HJ branch migration allows RuvC to scan DNA until it finds its consensus sequence, where it cleaves and resolves the cruciform DNA. This Cereibacter sphaeroides (strain ATCC 17029 / ATH 2.4.9) (Rhodobacter sphaeroides) protein is Holliday junction branch migration complex subunit RuvA.